A 1007-amino-acid chain; its full sequence is MAAAETQSLREQPEMEDANSEKSINEENGEVSEDQSQNKHSRHKKKKHKHRSKHKKHKHSSEEDKDKKHKHKHKHKKHKRKEVIDASDKEGMSPAKRTKLDDLALLEDLEKQRALIKAELDNELMEGKVQSGMGLILQGYESGSEEEGEIHEKARNGNRSSTRSSSTKGKLELVDNKITTKKRSKSRSKERTRHRSDKKKSKGGIEIIKEKTTRSKSKERKKSKSPSKRSKSQDQARKSKSPTLRRRSQEKIGKARSPTDDKVKIEDKSKSKDRKKSPIINESRSRDRGKKSRSPVDLRGKSKDRRSRSKERKSKRSETDKEKKPIKSPSKDASSGKENRSPSRRPGRSPKRRSLSPKPRDKSRRSRSPLLNDRRSKQSKSPSRTLSPGRRAKSRSLERKRREPERRRLSSPRTRPRDDILSRRERSKDASPINRWSPTRRRSRSPIRRRSRSPLRRSRSPRRRSRSPRRRDRGRRSRSRLRRRSRSRGGRRRRSRSKVKEDKFKGSLSEGMKVEQESSSDDNLEDFDVEEEDEEALIEQRRIQRQAIVQKYKYLAEDSNMSVPSEPSSPQSSTRTRSPSPDDILERVAADVKEYERENVDTFEASVKAKHNLMTVEQNNGSSQKKLLAPDMFTESDDMFAAYFDSARLRAAGIGKDFKENPNLRDNWTDAEGYYRVNIGEVLDKRYNVYGYTGQGVFSNVVRARDNARASQEVAVKIIRNNELMQKTGLKELEFLKKLNDADPDDKFHCLRLFRHFYHKQHLCLVFEPLSMNLREVLKKYGKDVGLHIKAVRSYSQQLFLALKLLKRCNILHADIKPDNILVNESKTILKLCDFGSASHVADNDITPYLVSRFYRAPEIIIGKSYDYGIDMWSVGCTLYELYTGKILFPGKTNNHMLKLAMDLKGKMPNKMIRKGVFKDQHFDPNLNFMYIEVDKVTEREKVTVMSTINPTKDLLADLIGCQRLPEDQRKKVHQLKDLLDQILMLDPAKRISINQALQHAFIQEKI.

Residues 1–10 (MAAAETQSLR) show a composition bias toward polar residues. Positions 1–99 (MAAAETQSLR…EGMSPAKRTK (99 aa)) are disordered. The residue at position 2 (A2) is an N-acetylalanine. Phosphoserine occurs at positions 8, 20, 23, and 32. Basic residues-rich tracts occupy residues 39 to 59 (KHSR…KHKH) and 67 to 81 (KKHK…HKRK). Basic and acidic residues predominate over residues 82–91 (EVIDASDKEG). Residues S87 and S93 each carry the phosphoserine modification. At K99 the chain carries N6-acetyllysine; alternate. A Glycyl lysine isopeptide (Lys-Gly) (interchain with G-Cter in SUMO2); alternate cross-link involves residue K99. K111 participates in a covalent cross-link: Glycyl lysine isopeptide (Lys-Gly) (interchain with G-Cter in SUMO2). K117 participates in a covalent cross-link: Glycyl lysine isopeptide (Lys-Gly) (interchain with G-Cter in SUMO2); alternate. A Glycyl lysine isopeptide (Lys-Gly) (interchain with G-Cter in SUMO1); alternate cross-link involves residue K117. A Phosphoserine modification is found at S131. A Phosphotyrosine modification is found at Y140. Disordered stretches follow at residues 140–533 (YESG…EEED) and 559–583 (SNMS…SPDD). A phosphoserine mark is found at S142, S144, and S166. A compositionally biased stretch (low complexity) spans 157–168 (GNRSSTRSSSTK). Residues K170 and K177 each participate in a glycyl lysine isopeptide (Lys-Gly) (interchain with G-Cter in SUMO2) cross-link. Composition is skewed to basic residues over residues 179–202 (TTKK…KKSK) and 214–230 (RSKS…SKRS). S239, S241, S257, S277, S283, S292, and S294 each carry phosphoserine. Residues 247–270 (RSQEKIGKARSPTDDKVKIEDKSK) show a composition bias toward basic and acidic residues. Basic residues predominate over residues 302–315 (SKDRRSRSKERKSK). Over residues 316–325 (RSETDKEKKP) the composition is skewed to basic and acidic residues. 5 positions are modified to phosphoserine: S328, S354, S356, S366, and S368. Over residues 342–367 (PSRRPGRSPKRRSLSPKPRDKSRRSR) the composition is skewed to basic residues. Residue T385 is modified to Phosphothreonine. S387 is subject to Phosphoserine. Basic and acidic residues-rich tracts occupy residues 395 to 408 (RSLE…ERRR) and 415 to 429 (RPRD…RSKD). 3 positions are modified to phosphoserine: S427, S431, and S437. Over residues 438–497 (PTRRRSRSPIRRRSRSPLRRSRSPRRRSRSPRRRDRGRRSRSRLRRRSRSRGGRRRRSRS) the composition is skewed to basic residues. Phosphoserine is present on residues S518, S519, S520, S565, S569, S578, and S580. Over residues 518–533 (SSSDDNLEDFDVEEED) the composition is skewed to acidic residues. Residues 562-581 (SVPSEPSSPQSSTRTRSPSP) are compositionally biased toward low complexity. Glycyl lysine isopeptide (Lys-Gly) (interchain with G-Cter in SUMO2) cross-links involve residues K593 and K659. One can recognise a Protein kinase domain in the interval 687–1003 (YNVYGYTGQG…INQALQHAFI (317 aa)). ATP is bound by residues 693-701 (TGQGVFSNV) and K717. K717 is subject to N6-acetyllysine. Catalysis depends on D815, which acts as the Proton acceptor. Phosphotyrosine is present on Y849. Phosphoserine is present on S852.

It belongs to the protein kinase superfamily. CMGC Ser/Thr protein kinase family. As to quaternary structure, interacts with CLK1 C-terminus. Associates with the U5 snRNP and NCOR1 deacetylase complexes. Identified in the spliceosome C complex. In terms of processing, phosphorylated by CLK1. Autophosphorylated; phosphorylation inhibits interaction with its targets, such as PRPF6 or SMARCA4.

The protein resides in the nucleus. It is found in the chromosome. It localises to the centromere. The protein localises to the kinetochore. The catalysed reaction is L-seryl-[protein] + ATP = O-phospho-L-seryl-[protein] + ADP + H(+). It carries out the reaction L-threonyl-[protein] + ATP = O-phospho-L-threonyl-[protein] + ADP + H(+). Its function is as follows. Serine/threonine kinase involved in spliceosomal assembly as well as mitosis and signaling regulation. Connects chromatin mediated regulation of transcription and pre-mRNA splicing. During spliceosomal assembly, interacts with and phosphorylates PRPF6 and PRPF31, components of the U4/U6-U5 tri-small nuclear ribonucleoprotein (snRNP), to facilitate the formation of the spliceosome B complex. Plays a role in regulating transcription and the spindle assembly checkpoint (SAC). Associates with U5 snRNP and NCOR1 deacetylase complexes which may allow a coordination of pre-mRNA splicing with chromatin remodeling events involved in transcriptional regulation. Associates and probably phosphorylates SMARCA4 and NCOR1. Phosphorylates SRSF1. Associates with kinetochores during mitosis and is necessary for recruitment and maintenance of the checkpoint proteins such as MAD1L1 and MAD12L1 at the kinetochores. Phosphorylates and regulates the activity of the transcription factors such as ELK1 and KLF13. Phosphorylates nuclear YAP1 and WWTR1/TAZ which induces nuclear exclusion and regulates Hippo signaling pathway, involved in tissue growth control. The chain is Serine/threonine-protein kinase PRP4 homolog (PRP4K) from Pongo abelii (Sumatran orangutan).